A 3373-amino-acid polypeptide reads, in one-letter code: Intermembrane lipid transfer protein vps13A (3373 aa).

In terms of domain architecture, Chorein N-terminal spans 3–119 (FEGLVSDVLS…QAELKKKKLE (117 aa)). Disordered regions lie at residues 818 to 858 (PKAT…VNSS), 1028 to 1096 (VPIN…KTAS), 1259 to 1304 (NNNK…DLEK), 1648 to 1729 (DPSI…EEEK), and 1872 to 1913 (QKKR…GKKD). A compositionally biased stretch (polar residues) spans 823–839 (TPINDSNSPSSVSPKLI). 2 stretches are compositionally biased toward low complexity: residues 840–858 (STSPHSFSSSSAPVDVNSS) and 1048–1066 (SSPNQQSPNQQSPNQQSPQ). Composition is skewed to basic and acidic residues over residues 1263-1274 (SIEKSKSIDSKL) and 1288-1304 (RSDDNHEKSERELDLEK). Low complexity-rich tracts occupy residues 1659 to 1685 (QQQQQQSSSSSFIPSQQQQQQKVRSQS), 1695 to 1716 (SSIGGKESKTISSSISNNSLSS), and 1884 to 1898 (SSSTSLPSLNKSTNS). A compositionally biased stretch (polar residues) spans 1899–1909 (FQTSTSGNSNS). The 302-residue stretch at 2405 to 2706 (TLSFYCQYWL…CYGWDEPSAE (302 aa)) folds into the SHR-BD domain. Residues 2909 to 2933 (RGNNASNNNNNNGMTSSQMRQSGSG) are disordered. Low complexity predominate over residues 2911-2920 (NNASNNNNNN).

Belongs to the VPS13 family.

The protein localises to the membrane. In terms of biological role, mediates the transfer of lipids between membranes at organelle contact sites. This Dictyostelium discoideum (Social amoeba) protein is Intermembrane lipid transfer protein vps13A (vps13A).